A 183-amino-acid chain; its full sequence is MSSAGRIVATRILGLDPGLRITGFGVIDTLGSQLRYVASGCIKTRDGELPGRLKTLLDGVREVIATYQPDAVAVEKVFVNVNPQSTLLLGQARGAVICGAVSCDLPVAEYTALQVKQSVVGYGKAAKEQVQHMVQRLLALDASPGPDAADALACAICHAHGGQGLGGQAGIGGRRRAGRILSL.

Residues Asp-16, Glu-75, and Asp-147 contribute to the active site. 3 residues coordinate Mg(2+): Asp-16, Glu-75, and Asp-147.

This sequence belongs to the RuvC family. Homodimer which binds Holliday junction (HJ) DNA. The HJ becomes 2-fold symmetrical on binding to RuvC with unstacked arms; it has a different conformation from HJ DNA in complex with RuvA. In the full resolvosome a probable DNA-RuvA(4)-RuvB(12)-RuvC(2) complex forms which resolves the HJ. It depends on Mg(2+) as a cofactor.

It is found in the cytoplasm. The catalysed reaction is Endonucleolytic cleavage at a junction such as a reciprocal single-stranded crossover between two homologous DNA duplexes (Holliday junction).. Functionally, the RuvA-RuvB-RuvC complex processes Holliday junction (HJ) DNA during genetic recombination and DNA repair. Endonuclease that resolves HJ intermediates. Cleaves cruciform DNA by making single-stranded nicks across the HJ at symmetrical positions within the homologous arms, yielding a 5'-phosphate and a 3'-hydroxyl group; requires a central core of homology in the junction. The consensus cleavage sequence is 5'-(A/T)TT(C/G)-3'. Cleavage occurs on the 3'-side of the TT dinucleotide at the point of strand exchange. HJ branch migration catalyzed by RuvA-RuvB allows RuvC to scan DNA until it finds its consensus sequence, where it cleaves and resolves the cruciform DNA. The polypeptide is Crossover junction endodeoxyribonuclease RuvC (Azoarcus sp. (strain BH72)).